A 545-amino-acid chain; its full sequence is MVSLLRCQSFKPSSSLICSLALSAAFALSSSAFAEETKPAENKPATPVVSPPKATAQPANKNQVRFTKTGTFDGDSVVKLARKLASKPYVVLKDPLPAGLAKLSYDEYRDIRFNPVSSIWRDQGLPFQMQMFHRGFYFQDLIEIAIVEANQATHLAYEPKYFTAGEVITQALPNDDIGYSGFRIHNQLNTNGVYDELMVFQGASYFRALGKGNSYGLSARGLALKTADPEGEEFPIFRAFWVERPSYDSNLIVVHALLDSPSVAGAYRFSVRPGDNTQIDVEATLFPRVELSKVGLAPSTSMFLHSLNGRHDTDDFRPEVHDSDGLLMFNGRGEHLWRPLANPRQLQVSAFSDNSPQGFGLIQRERNYASYQDLEAHYERRPSLWIEPVGNWGQGAVVLTEIPTESEIHDNIVSFWKPRQPIPAGSEYHFAYRMSWGDEPVAKTNSVVVSRTASGRADIAKATPRRLFVVDYHLNGAMPDELPLAKVESSGGVIANVVIARNAANNGYRLAFELEPEDKELIELRAELKFSTPRQVETWLYRWTL.

The N-terminal stretch at 1–34 is a signal peptide; that stretch reads MVSLLRCQSFKPSSSLICSLALSAAFALSSSAFA. The tract at residues 38-60 is disordered; sequence KPAENKPATPVVSPPKATAQPAN.

The protein belongs to the OpgD/OpgG family.

Its subcellular location is the periplasm. The protein operates within glycan metabolism; osmoregulated periplasmic glucan (OPG) biosynthesis. Its function is as follows. Involved in the biosynthesis of osmoregulated periplasmic glucans (OPGs). This is Glucans biosynthesis protein G from Shewanella sp. (strain MR-4).